The following is a 237-amino-acid chain: Probable aquaporin SIP2-1 (237 aa).

6 helical membrane passes run 15 to 35 (FMWI…LGFS), 39 to 59 (PSGE…FAYL), 71 to 91 (LTAL…SVFV), 122 to 142 (VAIH…VLLS), 169 to 189 (ILGS…GWAY), and 202 to 222 (VYWL…KVVF). Positions 69 to 71 (NPL) match the NPA 1 motif. Positions 180–182 (NPA) match the NPA 2 motif.

Belongs to the MIP/aquaporin (TC 1.A.8) family. SIP (TC 1.A.8.10) subfamily. In terms of tissue distribution, expressed in dividing cells and elongating regions of the root tips, emerging lateral roots, root steles, cotyledons, main veins of the rosette leaves, vascular tissues of the flower petals, stigma, stamens (anthers and filaments), pollen and the top and bottom (receptacle) of siliques.

The protein localises to the endoplasmic reticulum membrane. Functionally, water channel required to facilitate the transport of water across cell membrane. Inactive in yeast cells. In Arabidopsis thaliana (Mouse-ear cress), this protein is Probable aquaporin SIP2-1 (SIP2-1).